The sequence spans 211 residues: Protein-L-isoaspartate O-methyltransferase (211 aa).

The active site involves Ser-62.

The protein belongs to the methyltransferase superfamily. L-isoaspartyl/D-aspartyl protein methyltransferase family.

Its subcellular location is the cytoplasm. It catalyses the reaction [protein]-L-isoaspartate + S-adenosyl-L-methionine = [protein]-L-isoaspartate alpha-methyl ester + S-adenosyl-L-homocysteine. Functionally, catalyzes the methyl esterification of L-isoaspartyl residues in peptides and proteins that result from spontaneous decomposition of normal L-aspartyl and L-asparaginyl residues. It plays a role in the repair and/or degradation of damaged proteins. This chain is Protein-L-isoaspartate O-methyltransferase, found in Shewanella piezotolerans (strain WP3 / JCM 13877).